The following is a 345-amino-acid chain: Protein sdf-9 (345 aa).

Positions 33–284 (NRNRVVKIVP…SFIYEAVLDY (252 aa)) constitute a Tyrosine-protein phosphatase domain.

The protein belongs to the protein-tyrosine phosphatase family. Expressed in the 2 embryonic head hypodermal cells XXXL/R.

The protein resides in the cytoplasm. It localises to the cell membrane. Functionally, together with eak-4 and phosphatase eak-6, negatively regulates dauer larva formation downstream of insulin-like receptor daf-2 and in parallel of age-1, pdk-1 and akt-1. The polypeptide is Protein sdf-9 (Caenorhabditis elegans).